We begin with the raw amino-acid sequence, 86 residues long: Large ribosomal subunit protein bL31B (86 aa).

This sequence belongs to the bacterial ribosomal protein bL31 family. Type B subfamily. In terms of assembly, part of the 50S ribosomal subunit.

This is Large ribosomal subunit protein bL31B from Cupriavidus metallidurans (strain ATCC 43123 / DSM 2839 / NBRC 102507 / CH34) (Ralstonia metallidurans).